The sequence spans 123 residues: Late histone H2B.L1 (123 aa).

Low complexity predominate over residues 1 to 10 (MPAKAQPAGK). Residues 1–33 (MPAKAQPAGKKGSKKAKAPRPSGGKKRRRRRKE) form a disordered region. Residues 11–32 (KGSKKAKAPRPSGGKKRRRRRK) show a composition bias toward basic residues. A glycan (O-linked (GlcNAc) serine) is linked at Ser110. Residue Lys118 forms a Glycyl lysine isopeptide (Lys-Gly) (interchain with G-Cter in ubiquitin) linkage.

Belongs to the histone H2B family. In terms of assembly, the nucleosome is a histone octamer containing two molecules each of H2A, H2B, H3 and H4 assembled in one H3-H4 heterotetramer and two H2A-H2B heterodimers. The octamer wraps approximately 147 bp of DNA. In terms of processing, monoubiquitination of Lys-118 gives a specific tag for epigenetic transcriptional activation and is also prerequisite for histone H3 'Lys-4' and 'Lys-79' methylation. GlcNAcylation at Ser-110 promotes monoubiquitination of Lys-118. It fluctuates in response to extracellular glucose, and associates with transcribed genes.

The protein localises to the nucleus. The protein resides in the chromosome. Functionally, core component of nucleosome. Nucleosomes wrap and compact DNA into chromatin, limiting DNA accessibility to the cellular machineries which require DNA as a template. Histones thereby play a central role in transcription regulation, DNA repair, DNA replication and chromosomal stability. DNA accessibility is regulated via a complex set of post-translational modifications of histones, also called histone code, and nucleosome remodeling. This is Late histone H2B.L1 from Strongylocentrotus purpuratus (Purple sea urchin).